Here is a 183-residue protein sequence, read N- to C-terminus: Orotate phosphoribosyltransferase (183 aa).

Residues R100, K101, K104, H106, and 126 to 134 (EDVVTTGSS) each bind 5-phospho-alpha-D-ribose 1-diphosphate. Residues T130 and R158 each coordinate orotate.

Belongs to the purine/pyrimidine phosphoribosyltransferase family. PyrE subfamily. Homodimer. Mg(2+) serves as cofactor.

The catalysed reaction is orotidine 5'-phosphate + diphosphate = orotate + 5-phospho-alpha-D-ribose 1-diphosphate. Its pathway is pyrimidine metabolism; UMP biosynthesis via de novo pathway; UMP from orotate: step 1/2. Functionally, catalyzes the transfer of a ribosyl phosphate group from 5-phosphoribose 1-diphosphate to orotate, leading to the formation of orotidine monophosphate (OMP). The protein is Orotate phosphoribosyltransferase of Aquifex aeolicus (strain VF5).